We begin with the raw amino-acid sequence, 63 residues long: MIIVSLKEGENLEKALKKFKRKFERTGVSKELKRRQAFVKPSVLRRNQKIHAIYAQKFLQSGD.

The protein belongs to the bacterial ribosomal protein bS21 family.

This is Small ribosomal subunit protein bS21 from Azobacteroides pseudotrichonymphae genomovar. CFP2.